The primary structure comprises 567 residues: Urease subunit alpha (567 aa).

Positions 129–567 constitute a Urease domain; sequence GGVDTHIHFI…LPMAQRYFLF (439 aa). His134, His136, and Lys217 together coordinate Ni(2+). An N6-carboxylysine modification is found at Lys217. His219 serves as a coordination point for substrate. The Ni(2+) site is built by His246 and His272. His320 acts as the Proton donor in catalysis. Residue Asp360 participates in Ni(2+) binding.

The protein belongs to the metallo-dependent hydrolases superfamily. Urease alpha subunit family. In terms of assembly, heterotrimer of UreA (gamma), UreB (beta) and UreC (alpha) subunits. Three heterotrimers associate to form the active enzyme. Requires Ni cation as cofactor. Carboxylation allows a single lysine to coordinate two nickel ions.

It is found in the cytoplasm. It catalyses the reaction urea + 2 H2O + H(+) = hydrogencarbonate + 2 NH4(+). It participates in nitrogen metabolism; urea degradation; CO(2) and NH(3) from urea (urease route): step 1/1. This chain is Urease subunit alpha, found in Aliivibrio fischeri (strain MJ11) (Vibrio fischeri).